The following is a 178-amino-acid chain: ATP-dependent protease subunit HslV (178 aa).

The active site involves Thr-7. Na(+) is bound by residues Gly-162, Cys-165, and Thr-168.

The protein belongs to the peptidase T1B family. HslV subfamily. A double ring-shaped homohexamer of HslV is capped on each side by a ring-shaped HslU homohexamer. The assembly of the HslU/HslV complex is dependent on binding of ATP.

It is found in the cytoplasm. It carries out the reaction ATP-dependent cleavage of peptide bonds with broad specificity.. Its activity is regulated as follows. Allosterically activated by HslU binding. Its function is as follows. Protease subunit of a proteasome-like degradation complex believed to be a general protein degrading machinery. The chain is ATP-dependent protease subunit HslV from Cupriavidus taiwanensis (strain DSM 17343 / BCRC 17206 / CCUG 44338 / CIP 107171 / LMG 19424 / R1) (Ralstonia taiwanensis (strain LMG 19424)).